A 374-amino-acid chain; its full sequence is Alpha-galactosylglucosyldiacylglycerol synthase (374 aa).

Belongs to the glycosyltransferase group 1 family. Glycosyltransferase 4 subfamily. Mg(2+) serves as cofactor.

The protein localises to the cell membrane. It catalyses the reaction a 1,2-diacyl-3-O-(alpha-D-glucopyranosyl)-sn-glycerol + UDP-alpha-D-galactose = a 1,2-diacyl-3-O-[alpha-D-galactopyranosyl-(1-&gt;2)-alpha-D-glucopyranosyl]-sn-glycerol + UDP + H(+). Its activity is regulated as follows. Activated by the negatively charged lipid phosphatidylglycerol (PG). Galactosyltransferase involved in the biosynthesis of the bilayer-forming membrane lipid alpha-galactosyl-glucosyldiacylglycerol which is involved in maintaining constant nonbilayer/bilayer conditions (curvature packing stress). Also involved in the beta-lactam resistance. Catalyzes the transfer of a galactosyl residue from UDP-Gal to alpha-glucosyl-DAG (1,2-diacyl-3-O-(alpha-D-glucopyranosyl)-sn-glycerol) acceptor to form the corresponding galactosyl-glycosyl-DAG product (3-O-alpha-(D-galactopyranosyl-alpha-(1-&gt;2)-D-glucopyranosyl)-1,2-diacyl-sn-glycerol). It can only use UDP-Gal as sugar donor and alpha-glucosyl-DAG is the preferred sugar acceptor. The protein is Alpha-galactosylglucosyldiacylglycerol synthase (cpoA) of Streptococcus pneumoniae (strain ATCC BAA-255 / R6).